We begin with the raw amino-acid sequence, 80 residues long: Large ribosomal subunit protein bL31B (80 aa).

The protein belongs to the bacterial ribosomal protein bL31 family. Type B subfamily. As to quaternary structure, part of the 50S ribosomal subunit.

In Streptococcus sanguinis (strain SK36), this protein is Large ribosomal subunit protein bL31B.